Reading from the N-terminus, the 257-residue chain is Diacetyl reductase [(S)-acetoin forming] (257 aa).

Position 6–30 (6–30 (IITGSAGGLGKGIAERLANDGFNIV)) interacts with NAD(+). S139 contributes to the substrate binding site. Catalysis depends on Y152, which acts as the Proton acceptor. The active site involves K156.

It belongs to the short-chain dehydrogenases/reductases (SDR) family.

It catalyses the reaction (S)-acetoin + NAD(+) = diacetyl + NADH + H(+). In terms of biological role, catalyzes the irreversible reduction of 2,3-butanediol to (S)-acetoin in the presence of NADH. The sequence is that of Diacetyl reductase [(S)-acetoin forming] (butA) from Staphylococcus epidermidis (strain ATCC 35984 / DSM 28319 / BCRC 17069 / CCUG 31568 / BM 3577 / RP62A).